We begin with the raw amino-acid sequence, 205 residues long: uncharacterized protein (205 aa).

The protein belongs to the flavoredoxin family. It depends on FMN as a cofactor.

This is an uncharacterized protein from Bacillus subtilis (strain 168).